The chain runs to 167 residues: Phospholipase A and acyltransferase 1 (167 aa).

The Cytoplasmic portion of the chain corresponds to 1–138; it reads MAVNDCFSLT…GEGVSEQANR (138 aa). Positions 20–135 constitute an LRAT domain; sequence LIEVFRPCYQ…LRYGEGVSEQ (116 aa). Residue His30 is part of the active site. The active-site Acyl-thioester intermediate is the Cys119. Residues 139–159 form a helical membrane-spanning segment; sequence AIGTIGLVAAGIDIFTFLGLF. Over 160 to 167 the chain is Lumenal; that stretch reads PKRQRTKY.

The protein belongs to the H-rev107 family. In terms of tissue distribution, expressed in skeletal muscle, heart, brain, bone marrow and testis. Abundantly expressed in brain, heart, and skeletal muscle.

Its subcellular location is the membrane. The protein localises to the cytoplasm. It localises to the nucleus. It catalyses the reaction a 1,2-diacyl-sn-glycero-3-phosphocholine + H2O = a 1-acyl-sn-glycero-3-phosphocholine + a fatty acid + H(+). The catalysed reaction is a 1,2-diacyl-sn-glycero-3-phosphocholine + H2O = a 2-acyl-sn-glycero-3-phosphocholine + a fatty acid + H(+). It carries out the reaction 1,2-dihexadecanoyl-sn-glycero-3-phosphocholine + H2O = 2-hexadecanoyl-sn-glycero-3-phosphocholine + hexadecanoate + H(+). The enzyme catalyses 1,2-dihexadecanoyl-sn-glycero-3-phosphocholine + H2O = 1-hexadecanoyl-sn-glycero-3-phosphocholine + hexadecanoate + H(+). It catalyses the reaction 1-hexadecanoyl-2-(5Z,8Z,11Z,14Z-eicosatetraenoyl)-sn-glycero-3-phosphoethanolamine + H2O = 2-(5Z,8Z,11Z,14Z)-eicosatetraenoyl-sn-glycero-3-phosphoethanolamine + hexadecanoate + H(+). The catalysed reaction is 1-hexadecanoyl-2-(5Z,8Z,11Z,14Z-eicosatetraenoyl)-sn-glycero-3-phosphoethanolamine + H2O = 1-hexadecanoyl-sn-glycero-3-phosphoethanolamine + (5Z,8Z,11Z,14Z)-eicosatetraenoate + H(+). It carries out the reaction 1,2-di-(9Z-octadecenoyl)-sn-glycero-3-phosphoethanolamine + 1,2-dihexadecanoyl-sn-glycero-3-phosphocholine = hexadecanoyl-sn-glycero-3-phosphocholine + N-hexadecanoyl-1,2-di-(9Z-octadecenoyl)-sn-glycero-3-phosphoethanolamine + H(+). The enzyme catalyses 1,2-dihexadecanoyl-sn-glycero-3-phosphocholine + a 2-acyl-sn-glycero-3-phosphocholine = a 1-hexadecanoyl-2-acyl-sn-glycero-3-phosphocholine + 2-hexadecanoyl-sn-glycero-3-phosphocholine. Functionally, exhibits both phospholipase A1/2 and acyltransferase activities. Shows phospholipase A1 (PLA1) and A2 (PLA2) activity, catalyzing the calcium-independent release of fatty acids from the sn-1 or sn-2 position of glycerophospholipids. Shows O-acyltransferase activity, catalyzing the transfer of a fatty acyl group from glycerophospholipid to the hydroxyl group of lysophospholipid. Shows N-acyltransferase activity, catalyzing the calcium-independent transfer of a fatty acyl group at the sn-1 position of phosphatidylcholine (PC) and other glycerophospholipids to the primary amine of phosphatidylethanolamine (PE), forming N-acylphosphatidylethanolamine (NAPE), which serves as precursor for N-acylethanolamines (NAEs). This Mus musculus (Mouse) protein is Phospholipase A and acyltransferase 1.